A 349-amino-acid polypeptide reads, in one-letter code: 5-deoxyribose 1-phosphate isomerase (349 aa).

Residues 49-51 (RGA), Arg92, and Gln199 each bind substrate. The Proton donor role is filled by Asp240. Residue 250–251 (NK) participates in substrate binding.

This sequence belongs to the EIF-2B alpha/beta/delta subunits family. DrdI subfamily.

It carries out the reaction 5-deoxy-alpha-D-ribose 1-phosphate = 5-deoxy-D-ribulose 1-phosphate. The protein operates within carbohydrate degradation. Functionally, catalyzes the isomerization of 5-deoxy-alpha-D-ribose 1-phosphate to 5-deoxy-D-ribulose 1-phosphate, as part of a 5-deoxyribose salvage pathway that recycles this toxic radical SAM enzyme by-product to mainstream metabolites. The protein is 5-deoxyribose 1-phosphate isomerase of Clostridium botulinum (strain 657 / Type Ba4).